Consider the following 741-residue polypeptide: NAD(P)H-quinone oxidoreductase subunit 5, chloroplastic (741 aa).

15 consecutive transmembrane segments (helical) span residues W9 to F29, W40 to I60, I89 to I109, F125 to I145, I147 to A167, G185 to F205, N219 to A239, T258 to A278, L280 to I300, L327 to I347, T396 to S416, W425 to Y445, L547 to F567, I606 to V626, and S721 to I741.

The protein belongs to the complex I subunit 5 family. NDH is composed of at least 16 different subunits, 5 of which are encoded in the nucleus.

It is found in the plastid. The protein resides in the chloroplast thylakoid membrane. The enzyme catalyses a plastoquinone + NADH + (n+1) H(+)(in) = a plastoquinol + NAD(+) + n H(+)(out). It catalyses the reaction a plastoquinone + NADPH + (n+1) H(+)(in) = a plastoquinol + NADP(+) + n H(+)(out). NDH shuttles electrons from NAD(P)H:plastoquinone, via FMN and iron-sulfur (Fe-S) centers, to quinones in the photosynthetic chain and possibly in a chloroplast respiratory chain. The immediate electron acceptor for the enzyme in this species is believed to be plastoquinone. Couples the redox reaction to proton translocation, and thus conserves the redox energy in a proton gradient. This is NAD(P)H-quinone oxidoreductase subunit 5, chloroplastic (ndhF) from Ceratophyllum demersum (Rigid hornwort).